The chain runs to 707 residues: ATP-dependent zinc metalloprotease FtsH (707 aa).

At 1-25 the chain is on the cytoplasmic side; it reads MSELDNKKDKSKDSNKKPKKPGAFS. The chain crosses the membrane as a helical span at residues 26–46; the sequence is IGNIIIFVIVALLLIWVVFAF. Over 47–128 the chain is Extracellular; sequence LPNNPGTNKS…GTTFTGLELA (82 aa). Residues 129 to 149 form a helical membrane-spanning segment; sequence TLAIANTSASGIGTLNFSGLV. The Cytoplasmic segment spans residues 150–707; sequence TPTNQALAIL…IKTDESLDIK (558 aa). 246–253 lines the ATP pocket; sequence GPPGTGKT. Zn(2+) is bound at residue His468. Glu469 is an active-site residue. Positions 472 and 546 each coordinate Zn(2+).

The protein in the central section; belongs to the AAA ATPase family. It in the C-terminal section; belongs to the peptidase M41 family. Homohexamer. Requires Zn(2+) as cofactor.

It localises to the cell membrane. Acts as a processive, ATP-dependent zinc metallopeptidase for both cytoplasmic and membrane proteins. Plays a role in the quality control of integral membrane proteins. In Mycoplasma mobile (strain ATCC 43663 / 163K / NCTC 11711) (Mesomycoplasma mobile), this protein is ATP-dependent zinc metalloprotease FtsH.